Consider the following 101-residue polypeptide: Small ribosomal subunit protein uS14 (101 aa).

The span at 1–10 shows a compositional bias: basic and acidic residues; it reads MAKKSSIEKN. Positions 1-23 are disordered; it reads MAKKSSIEKNNRRRRMNRNAAAK. Over residues 11 to 23 the composition is skewed to basic residues; sequence NRRRRMNRNAAAK.

The protein belongs to the universal ribosomal protein uS14 family. As to quaternary structure, part of the 30S ribosomal subunit. Contacts proteins S3 and S10.

Functionally, binds 16S rRNA, required for the assembly of 30S particles and may also be responsible for determining the conformation of the 16S rRNA at the A site. In Nitrobacter winogradskyi (strain ATCC 25391 / DSM 10237 / CIP 104748 / NCIMB 11846 / Nb-255), this protein is Small ribosomal subunit protein uS14.